A 164-amino-acid chain; its full sequence is Crossover junction endodeoxyribonuclease RuvC (164 aa).

Catalysis depends on residues aspartate 7, glutamate 67, and aspartate 139. The Mg(2+) site is built by aspartate 7, glutamate 67, and aspartate 139.

It belongs to the RuvC family. As to quaternary structure, homodimer which binds Holliday junction (HJ) DNA. The HJ becomes 2-fold symmetrical on binding to RuvC with unstacked arms; it has a different conformation from HJ DNA in complex with RuvA. In the full resolvosome a probable DNA-RuvA(4)-RuvB(12)-RuvC(2) complex forms which resolves the HJ. Mg(2+) is required as a cofactor.

The protein resides in the cytoplasm. The enzyme catalyses Endonucleolytic cleavage at a junction such as a reciprocal single-stranded crossover between two homologous DNA duplexes (Holliday junction).. In terms of biological role, the RuvA-RuvB-RuvC complex processes Holliday junction (HJ) DNA during genetic recombination and DNA repair. Endonuclease that resolves HJ intermediates. Cleaves cruciform DNA by making single-stranded nicks across the HJ at symmetrical positions within the homologous arms, yielding a 5'-phosphate and a 3'-hydroxyl group; requires a central core of homology in the junction. The consensus cleavage sequence is 5'-(A/T)TT(C/G)-3'. Cleavage occurs on the 3'-side of the TT dinucleotide at the point of strand exchange. HJ branch migration catalyzed by RuvA-RuvB allows RuvC to scan DNA until it finds its consensus sequence, where it cleaves and resolves the cruciform DNA. This is Crossover junction endodeoxyribonuclease RuvC from Geobacter sp. (strain M21).